Here is a 202-residue protein sequence, read N- to C-terminus: Transcription factor MUTE (202 aa).

A bHLH domain is found at 1-49 (MSHIAVERNRRRQMNEHLKSLRSLTPCFYIKRGDQASIIGGVIEFIKEL).

In terms of assembly, homodimer. Leaf epidermis and flowers.

It localises to the nucleus. Transcription factor. Together with FMA and SPCH, regulates the stomata formation. Required for the differentiation of stomatal guard cells, by promoting successive asymmetric cell divisions and the formation of guard mother cells. Promotes the conversion of the leaf epidermis into stomata. This chain is Transcription factor MUTE (MUTE), found in Arabidopsis thaliana (Mouse-ear cress).